The chain runs to 590 residues: G protein-coupled receptor kinase 5 (590 aa).

Residues 1-185 (MELENIVANT…LERQPVTKNT (185 aa)) are N-terminal. The tract at residues 20–39 (GGKRKGKSKKWKEILKFPHI) is interaction with calmodulin. Residues 53 to 171 (YYSLCDKQPI…LDSMYFDRFL (119 aa)) enclose the RGS domain. Residue S136 is modified to Phosphoserine. The 263-residue stretch at 186–448 (FRQYRVLGKG…AAEVKRHPFF (263 aa)) folds into the Protein kinase domain. ATP contacts are provided by residues 192–200 (LGKGGFGEV) and K215. D311 serves as the catalytic Proton acceptor. Positions 388 to 395 (RKEKVKRE) match the Nuclear localization signal motif. Positions 449 to 514 (RNMNFKRLEA…GSVPIPWQNE (66 aa)) constitute an AGC-kinase C-terminal domain. S484 bears the Phosphoserine; by autocatalysis mark. Phosphothreonine; by autocatalysis is present on T485. The sufficient for membrane localization stretch occupies residues 546 to 565 (PKKGLFHRLFRRQHQSNSKS). The tract at residues 557-590 (RQHQSNSKSSPTPKTSCNHRINSNHINSNSTGSS) is disordered. The span at 561-590 (SNSKSSPTPKTSCNHRINSNHINSNSTGSS) shows a compositional bias: low complexity. Position 579 is a phosphoserine (S579).

The protein belongs to the protein kinase superfamily. AGC Ser/Thr protein kinase family. GPRK subfamily. As to quaternary structure, interacts with ST13 (via the C-terminus 303-319 AA). Interacts with TP53/p53. Interacts with HTR4 (via C-terminus 330-346 AA); this interaction is promoted by 5-HT (serotonin). Interacts with HDAC5. Interacts with GIT1. Autophosphorylated. Autophosphorylation may play a critical role in the regulation of GRK5 kinase activity.

Its subcellular location is the cytoplasm. The protein resides in the nucleus. The protein localises to the cell membrane. The catalysed reaction is [G-protein-coupled receptor] + ATP = [G-protein-coupled receptor]-phosphate + ADP + H(+). Inhibited by calmodulin with an IC(50) of 50 nM. Calmodulin inhibits GRK5 association with receptor and phospholipid. Its function is as follows. Serine/threonine kinase that phosphorylates preferentially the activated forms of a variety of G-protein-coupled receptors (GPCRs). Such receptor phosphorylation initiates beta-arrestin-mediated receptor desensitization, internalization, and signaling events leading to their down-regulation. Phosphorylates a variety of GPCRs, including adrenergic receptors, muscarinic acetylcholine receptors (more specifically Gi-coupled M2/M4 subtypes), dopamine receptors and opioid receptors. In addition to GPCRs, also phosphorylates various substrates: Hsc70-interacting protein/ST13, TP53/p53, HDAC5, and arrestin-1/ARRB1. Phosphorylation of ARRB1 by GRK5 inhibits G-protein independent MAPK1/MAPK3 signaling downstream of 5HT4-receptors. Phosphorylation of HDAC5, a repressor of myocyte enhancer factor 2 (MEF2) leading to nuclear export of HDAC5 and allowing MEF2-mediated transcription. Phosphorylation of TP53/p53, a crucial tumor suppressor, inhibits TP53/p53-mediated apoptosis. Phosphorylation of ST13 regulates internalization of the chemokine receptor. Phosphorylates rhodopsin (RHO) (in vitro) and a non G-protein-coupled receptor, LRP6 during Wnt signaling (in vitro). The protein is G protein-coupled receptor kinase 5 (Grk5) of Mus musculus (Mouse).